The following is a 536-amino-acid chain: Bicoumarin synthase desC (536 aa).

The chain crosses the membrane as a helical span at residues 12–32 (YVALAGITGFFLVFLGFLVVI). N-linked (GlcNAc...) asparagine glycans are attached at residues Asn-149 and Asn-371. Heme is bound at residue Cys-480.

It belongs to the cytochrome P450 family. The cofactor is heme.

The protein localises to the membrane. It catalyses the reaction 2 7-demethylsiderin + NADPH + O2 = desertorin A + NADP(+) + 2 H2O. The protein operates within secondary metabolite biosynthesis. Its function is as follows. Non-reducing polyketide synthase; part of the gene cluster that mediates the biosynthesis of the bicoumarin desertorin. The non-reducing polyketide synthase desS first catalyzes the formation of the pentaketidic 4,7-dihydroxy-5-methylcoumarin from acetyl coenzyme A and 4 malonyl coenzyme A molecules. Further O-methylation by desB leads to the formation of 7-demethylsiderin. Then, an oxidative phenol coupling catalyzed by the cytochrome P450 monooxygenase desC forms the 6,8'-dimer M-desertorin A via dimerization the monomeric precursor, 7-demethylsiderin. M-desertorin A is further converted to M-desertorin C. This is Bicoumarin synthase desC from Aspergillus desertorum (Emericella desertorum).